The primary structure comprises 241 residues: Phosphoadenosine 5'-phosphosulfate reductase (241 aa).

Positions 221–241 (GADPRSGRWRGKAKTECGLHA) are disordered. The active-site Nucleophile; cysteine thiosulfonate intermediate is the Cys-237.

The protein belongs to the PAPS reductase family. CysH subfamily.

It is found in the cytoplasm. The enzyme catalyses [thioredoxin]-disulfide + sulfite + adenosine 3',5'-bisphosphate + 2 H(+) = [thioredoxin]-dithiol + 3'-phosphoadenylyl sulfate. It participates in sulfur metabolism; hydrogen sulfide biosynthesis; sulfite from sulfate: step 3/3. Its function is as follows. Catalyzes the formation of sulfite from phosphoadenosine 5'-phosphosulfate (PAPS) using thioredoxin as an electron donor. The protein is Phosphoadenosine 5'-phosphosulfate reductase of Gloeobacter violaceus (strain ATCC 29082 / PCC 7421).